A 498-amino-acid chain; its full sequence is O-methyltransferase OME1 (498 aa).

The span at 1 to 19 (MSTMALHRTASTKSDTTMA) shows a compositional bias: polar residues. Disordered stretches follow at residues 1–23 (MSTMALHRTASTKSDTTMACPNG) and 42–83 (HRAE…QPEY). Low complexity predominate over residues 50–65 (SSTSSVSTTPTSPSFS). Position 358 (Asp358) interacts with S-adenosyl-L-methionine. The Proton acceptor role is filled by His406.

The protein belongs to the class I-like SAM-binding methyltransferase superfamily. Cation-independent O-methyltransferase family.

It functions in the pathway secondary metabolite biosynthesis. In terms of biological role, O-methyltransferase; part of the gene cluster that mediates the biosynthesis of a tyrosine-derived cytochalasan acting as a fungal signal recognized by resistant rice plants and leads to avirulence in Pi33 resistant rice cultivars. The first step in the pathway is catalyzed by the hybrid PKS-NRPS ACE1, assisted by the enoyl reductase RAP1, that are responsible for fusion of the tyrosine precursor and the polyketide backbone. The polyketide synthase module (PKS) of ACE1 is responsible for the synthesis of the polyketide backbone and the downstream nonribosomal peptide synthetase (NRPS) amidates the carboxyl end of the polyketide with the tyrosine precursor. Because ACE1 lacks a designated enoylreductase (ER) domain, the required activity is provided the enoyl reductase RAP1. Reduction by the hydrolyase ORFZ, followed by dehydration and intra-molecular Diels-Alder cyclization by the Diels-Alderase ORF3 then yield the required isoindolone-fused macrocycle. A number of oxidative steps catalyzed by the tailoring enzymes identified within the cluster, including cytochrome P450 monooxygenases CYP1 to CYP4, the FAD-linked oxidoreductase OXR2 and the short-chain dehydrogenase/reductase OXR1, are further required to afford the final cytochalasans that confer avirulence and which have still to be identified. The monooxygenase CYP1 has been shown to be a site-selective C-18 hydroxylase whereas the function of CYP3 is the site-selective epoxidation of the C-6/C-7 olefin that is present in some intermediate compounds. Finally, SYN2 and RAP2 are not required for avirulence in Pi33 resistant rice cultivars. This is O-methyltransferase OME1 from Pyricularia oryzae (strain 70-15 / ATCC MYA-4617 / FGSC 8958) (Rice blast fungus).